Here is a 117-residue protein sequence, read N- to C-terminus: Large ribosomal subunit protein uL18 (117 aa).

Belongs to the universal ribosomal protein uL18 family. As to quaternary structure, part of the 50S ribosomal subunit; part of the 5S rRNA/L5/L18/L25 subcomplex. Contacts the 5S and 23S rRNAs.

Its function is as follows. This is one of the proteins that bind and probably mediate the attachment of the 5S RNA into the large ribosomal subunit, where it forms part of the central protuberance. This Histophilus somni (strain 129Pt) (Haemophilus somnus) protein is Large ribosomal subunit protein uL18.